Reading from the N-terminus, the 225-residue chain is Vacuolar protein sorting-associated protein 2 homolog 1 (225 aa).

A coiled-coil region spans residues 13 to 54; sequence AELLRENKRMLDKSIREIERERQGLQTQEKKLINEIKKTAKQ.

This sequence belongs to the SNF7 family. Component of the endosomal sorting required for transport complex III (ESCRT-III), composed at least of VPS2, VPS20, VPS24 and VPS32. Interacts with SKD1.

The protein localises to the endosome. In terms of biological role, component of the ESCRT-III complex, which is required for multivesicular bodies (MVBs) formation and sorting of endosomal cargo proteins into MVBs. The ESCRT-III complex is probably involved in the concentration of MVB cargo. This is Vacuolar protein sorting-associated protein 2 homolog 1 (VPS2.1) from Arabidopsis thaliana (Mouse-ear cress).